Consider the following 134-residue polypeptide: Putative pre-16S rRNA nuclease (134 aa).

The protein belongs to the YqgF nuclease family.

Its subcellular location is the cytoplasm. Its function is as follows. Could be a nuclease involved in processing of the 5'-end of pre-16S rRNA. The sequence is that of Putative pre-16S rRNA nuclease from Helicobacter pylori (strain P12).